Consider the following 94-residue polypeptide: Probable Fe(2+)-trafficking protein (94 aa).

This sequence belongs to the Fe(2+)-trafficking protein family.

Could be a mediator in iron transactions between iron acquisition and iron-requiring processes, such as synthesis and/or repair of Fe-S clusters in biosynthetic enzymes. This chain is Probable Fe(2+)-trafficking protein, found in Marinomonas sp. (strain MWYL1).